A 232-amino-acid chain; its full sequence is MTRPQAILTDIEGTTSSISFVKDVLFPYARRAMPAYVREHGNHPQVRHWLNQVADEIGEDVPDDVLITTLQTWIDEDRKHTALKALQGLIWGDGYKIADFTAHMYADAALQLQAWHAAGIPLYVYSSGSVPAQKLFFAHSDAGDLSGLVSDWFDTEVGSKREAASYRRIAERIGVPASEILFLSDVIEELDAAKRTGIRTALLERREDYPTPRSADDVGSHQRVESFSQLVF.

This sequence belongs to the HAD-like hydrolase superfamily. MasA/MtnC family. Monomer. Mg(2+) is required as a cofactor.

The enzyme catalyses 5-methylsulfanyl-2,3-dioxopentyl phosphate + H2O = 1,2-dihydroxy-5-(methylsulfanyl)pent-1-en-3-one + phosphate. It functions in the pathway amino-acid biosynthesis; L-methionine biosynthesis via salvage pathway; L-methionine from S-methyl-5-thio-alpha-D-ribose 1-phosphate: step 3/6. It participates in amino-acid biosynthesis; L-methionine biosynthesis via salvage pathway; L-methionine from S-methyl-5-thio-alpha-D-ribose 1-phosphate: step 4/6. Its function is as follows. Bifunctional enzyme that catalyzes the enolization of 2,3-diketo-5-methylthiopentyl-1-phosphate (DK-MTP-1-P) into the intermediate 2-hydroxy-3-keto-5-methylthiopentenyl-1-phosphate (HK-MTPenyl-1-P), which is then dephosphorylated to form the acireductone 1,2-dihydroxy-3-keto-5-methylthiopentene (DHK-MTPene). This chain is Enolase-phosphatase E1, found in Xanthomonas oryzae pv. oryzae (strain KACC10331 / KXO85).